The sequence spans 698 residues: Dual trans-enoyl reductase/FAD-dependent monooxygenase tazHJ (698 aa).

NADP(+) contacts are provided by residues 54–57, 78–81, Y96, and 279–280; these read STAT, SPRH, and IA. FAD is bound by residues E299, G312, and R372. R455 is an active-site residue. D571 and A584 together coordinate FAD.

This sequence in the N-terminal section; belongs to the zinc-containing alcohol dehydrogenase family. The protein in the C-terminal section; belongs to the paxM FAD-dependent monooxygenase family.

The protein operates within secondary metabolite biosynthesis. Dual trans-enoyl reductase/FAD-dependent monooxygenase; part of the gene cluster that mediates the biosynthesis of azaterrilone A and other azaphilones, a class of fungal metabolites characterized by a highly oxygenated pyrano-quinone bicyclic core and exhibiting a broad range of bioactivities. The first step of the pathway begins with the non-reducing polyketide synthase tazA that assembles one acetyl-CoA starter unit, five malonyl-CoA units, and catalyzes a series of Claisen condensations, methylation, PT-mediated cyclization, and finally releases the first hexaketide precursor through the R-domain. The tazA product then undergoes reduction on its terminal ketone and the following pyran-ring formation by yet undetermined enzyme(s). Dehydration and enoyl reduction, possibly involving the trans-enoyl reductase tazE leads to the next intermediate. TazD is predicted as an acetyltransferase and might catalyze the acetylation steps leading to the synthesis of azaterrilone A. Azaterrilone A is not the final product of the taz pathway and both the highly reducing polyketide synthase tazB and the dual enzyme tazHJ catalyze late steps of the pathway, leading to the production of the 2 final stereoisomers that contain additional polyketide modification whose structures have still to be determined. In Aspergillus terreus (strain NIH 2624 / FGSC A1156), this protein is Dual trans-enoyl reductase/FAD-dependent monooxygenase tazHJ.